A 68-amino-acid polypeptide reads, in one-letter code: Lipopolysaccharide export system ATP-binding protein LptB (68 aa).

The protein belongs to the ABC transporter superfamily. Outer membrane lipopolysaccharide export (TC 1.B.42) family. In terms of assembly, component of the lipopolysaccharide transport and assembly complex. The LptBFG transporter is composed of two ATP-binding proteins (LptB) and two transmembrane proteins (LptF and LptG).

The protein resides in the cytoplasm. Its subcellular location is the cell inner membrane. Functionally, part of the ABC transporter complex LptBFG involved in the translocation of lipopolysaccharide (LPS) from the inner membrane to the outer membrane. Probably responsible for energy coupling to the transport system. This chain is Lipopolysaccharide export system ATP-binding protein LptB (lptB), found in Klebsiella oxytoca.